A 486-amino-acid chain; its full sequence is Protein nucleotidyltransferase YdiU (486 aa).

ATP is bound by residues Gly90, Gly92, Arg93, Lys113, Asp125, Gly126, Arg176, and Arg183. Asp252 acts as the Proton acceptor in catalysis. Residues Asn253 and Asp262 each coordinate Mg(2+). An ATP-binding site is contributed by Asp262.

Belongs to the SELO family. Mg(2+) is required as a cofactor. It depends on Mn(2+) as a cofactor.

The catalysed reaction is L-seryl-[protein] + ATP = 3-O-(5'-adenylyl)-L-seryl-[protein] + diphosphate. It carries out the reaction L-threonyl-[protein] + ATP = 3-O-(5'-adenylyl)-L-threonyl-[protein] + diphosphate. It catalyses the reaction L-tyrosyl-[protein] + ATP = O-(5'-adenylyl)-L-tyrosyl-[protein] + diphosphate. The enzyme catalyses L-histidyl-[protein] + UTP = N(tele)-(5'-uridylyl)-L-histidyl-[protein] + diphosphate. The catalysed reaction is L-seryl-[protein] + UTP = O-(5'-uridylyl)-L-seryl-[protein] + diphosphate. It carries out the reaction L-tyrosyl-[protein] + UTP = O-(5'-uridylyl)-L-tyrosyl-[protein] + diphosphate. Functionally, nucleotidyltransferase involved in the post-translational modification of proteins. It can catalyze the addition of adenosine monophosphate (AMP) or uridine monophosphate (UMP) to a protein, resulting in modifications known as AMPylation and UMPylation. The chain is Protein nucleotidyltransferase YdiU from Pseudomonas paraeruginosa (strain DSM 24068 / PA7) (Pseudomonas aeruginosa (strain PA7)).